Reading from the N-terminus, the 961-residue chain is G protein-coupled receptor GPR1 (961 aa).

At 1–56 (MITEGFPPNLNALKGSSLLEKRVDSLRQLNTTTVNQLLGLPGMTSTFTAPQLLQLR) the chain is on the extracellular side. The helical transmembrane segment at 57–79 (IIAITASAVSLIAGCLGMFFLSK) threads the bilayer. The Cytoplasmic portion of the chain corresponds to 80–91 (MDKRRKVFRHDL). A helical membrane pass occupies residues 92 to 114 (IAFLIICDFLKAFILMIYPMIIL). Residues 115–133 (INNSVYATPAFFNTLGWFT) are Extracellular-facing. The helical transmembrane segment at 134–156 (AFAIEGADMAIMIFAIHFAILIF) threads the bilayer. The Cytoplasmic portion of the chain corresponds to 157-178 (KPNWKWRNKRSGNMEGGLYKKR). Residues 179-198 (SYIWPITALVPAILASLAFI) traverse the membrane as a helical segment. Residues 199-250 (NYNKLNDDSDTTIILDNNNYNFPDSPRQGGYKPWSAWCYLPPKPYWYKIVLS) are Extracellular-facing. Residues 251 to 273 (WGPRYFIIIFIFAVYLSIYIFIT) form a helical membrane-spanning segment. Over 274 to 619 (SESKRIKAQI…KKRRAQIQKN (346 aa)) the chain is Cytoplasmic. S373 is modified (phosphoserine). The disordered stretch occupies residues 468–568 (AMYDNKNDNS…PADNIPTLSN (101 aa)). Low complexity predominate over residues 502–558 (NNNNDNDNDNNNSNNNNNNNNNNNNNNNNNNNNNNNNNNNNNNSNNIKNNVDNNNTN). The chain crosses the membrane as a helical span at residues 620 to 642 (LRAIFIYPLSYIGIWLFPIIADA). Residues 643 to 822 (LQYNHEIKHG…AMLNNITAEE (180 aa)) lie on the Extracellular side of the membrane. Over residues 783–796 (DSNDNKRTESDETK) the composition is skewed to basic and acidic residues. A disordered region spans residues 783–805 (DSNDNKRTESDETKTNSSDRSLP). Residues 823 to 843 (VEVPLFWRIIHHIPMLGGIDL) traverse the membrane as a helical segment. Residues 844–961 (DELNRLLKIR…LIAFLRNGPL (118 aa)) are Cytoplasmic-facing. At S903 the chain carries Phosphoserine.

Belongs to the G-protein coupled receptor GPR1/git3 family.

It localises to the cell membrane. Seems to associate with GPA2 and act as G protein-coupled receptor that senses glucose and controls filamentous growth. It acts upstream of adenylate cyclase and is required for glucose activation of cAMP synthesis in concert with a glucose phosphorylation-dependent mechanism. The polypeptide is G protein-coupled receptor GPR1 (GPR1) (Saccharomyces cerevisiae (strain ATCC 204508 / S288c) (Baker's yeast)).